The chain runs to 271 residues: Phosphatidylinositol transfer protein beta isoform (271 aa).

Lys-215 is modified (N6-acetyllysine). Phosphoserine is present on Ser-262.

Belongs to the PtdIns transfer protein family. PI transfer class I subfamily. Constitutive phosphorylation of Ser-262 has no effect on phospholipid transfer activity but is required for Golgi targeting.

It localises to the golgi apparatus. It is found in the golgi apparatus membrane. Its subcellular location is the endoplasmic reticulum membrane. It carries out the reaction a 1,2-diacyl-sn-glycero-3-phosphocholine(in) = a 1,2-diacyl-sn-glycero-3-phosphocholine(out). The catalysed reaction is a 1,2-diacyl-sn-glycero-3-phospho-(1D-myo-inositol)(in) = a 1,2-diacyl-sn-glycero-3-phospho-(1D-myo-inositol)(out). It catalyses the reaction an N-(acyl)-sphingosylphosphocholine(in) = an N-(acyl)-sphingosylphosphocholine(out). Its function is as follows. Catalyzes the transfer of phosphatidylinositol, phosphatidylcholine and sphingomyelin between membranes. Required for COPI-mediated retrograde transport from the Golgi to the endoplasmic reticulum; phosphatidylinositol and phosphatidylcholine transfer activity is essential for this function. The sequence is that of Phosphatidylinositol transfer protein beta isoform (PITPNB) from Bos taurus (Bovine).